Consider the following 82-residue polypeptide: Quinohemoprotein amine dehydrogenase subunit gamma (82 aa).

Positions 7-16 (CTTSFDPGWE) form a cross-link, 4-cysteinyl-glutamic acid (Cys-Glu). 2 cross-links (3-cysteinyl-aspartic acid (Cys-Asp)) span residues 27–33 (CQPMEAD) and 41–49 (CWWPAQVAD). The Proton acceptor role is filled by D33. The 4'-cysteinyl-tryptophylquinone (Cys-Trp) cross-link spans 37–43 (CADPCWW). At W43 the chain carries Tryptophylquinone.

This sequence belongs to the quinohemoprotein amine dehydrogenase subunit gamma family. In terms of assembly, heterotrimer of an alpha, a beta and a gamma subunit. Cysteine tryptophylquinone residue is required as a cofactor. Post-translationally, the cysteine tryptophylquinone (CTQ) is generated by oxidation of the indole ring of a tryptophan residue to form tryptophylquinone, followed by covalent cross-linking with a cysteine residue.

The protein resides in the periplasm. The catalysed reaction is 2 Fe(III)-[cytochrome c550] + an aliphatic amine + H2O = 2 Fe(II)-[cytochrome c550] + an aldehyde + NH4(+) + 2 H(+). With respect to regulation, inhibited by carbonyl reagents such as hydrazine, hydroxylamine, phenylhydrazine and semicarbazide. Functionally, catalyzes the oxidative deamination of a wide range of primary aliphatic and aromatic amines. The physiological electron acceptor is the constitutive cytochrome c550. This Paracoccus denitrificans protein is Quinohemoprotein amine dehydrogenase subunit gamma (qhnDH).